The sequence spans 428 residues: Probable oxidoreductase OrdL (428 aa).

This is Probable oxidoreductase OrdL (ordL) from Rhizobium meliloti (strain 1021) (Ensifer meliloti).